A 1183-amino-acid chain; its full sequence is DNA-directed RNA polymerase subunit beta (1183 aa).

The segment at 1155 to 1183 (ADVDEDDVNEHKVNIQQSSIPESQKETTD) is disordered.

The protein belongs to the RNA polymerase beta chain family. As to quaternary structure, the RNAP catalytic core consists of 2 alpha, 1 beta, 1 beta' and 1 omega subunit. When a sigma factor is associated with the core the holoenzyme is formed, which can initiate transcription.

It catalyses the reaction RNA(n) + a ribonucleoside 5'-triphosphate = RNA(n+1) + diphosphate. Functionally, DNA-dependent RNA polymerase catalyzes the transcription of DNA into RNA using the four ribonucleoside triphosphates as substrates. The protein is DNA-directed RNA polymerase subunit beta of Staphylococcus carnosus (strain TM300).